The following is a 501-amino-acid chain: Leukocyte receptor cluster member 9 (501 aa).

4 disordered regions span residues 1–43 (MGSR…PAPP), 61–86 (RQPH…KPPL), 203–234 (GQEA…GELE), and 281–300 (QALG…WGPA). The segment at 40–67 (PAPPPACRFFLEGRCRFGARCRQPHPGA) adopts a C3H1-type zinc-finger fold.

This chain is Leukocyte receptor cluster member 9 (LENG9), found in Homo sapiens (Human).